The primary structure comprises 170 residues: Putative 5'(3')-deoxyribonucleotidase (170 aa).

D28 serves as the catalytic Nucleophile. 3 residues coordinate Mg(2+): D28, D30, and D134. Catalysis depends on D30, which acts as the Proton donor.

Belongs to the 5'(3')-deoxyribonucleotidase family. Requires Mg(2+) as cofactor.

In terms of biological role, dephosphorylates the 5' and 2'(3')-phosphates of deoxyribonucleotides. The protein is Putative 5'(3')-deoxyribonucleotidase of Vibrio parahaemolyticus (KVP40).